The sequence spans 101 residues: DNA-binding protein Fis (101 aa).

A DNA-binding region (H-T-H motif) is located at residues 77 to 96 (QTRAANMLGINRGTLRKKLK).

The protein belongs to the transcriptional regulatory Fis family. As to quaternary structure, homodimer.

Activates ribosomal RNA transcription. Plays a direct role in upstream activation of rRNA promoters. The protein is DNA-binding protein Fis of Shewanella loihica (strain ATCC BAA-1088 / PV-4).